Consider the following 354-residue polypeptide: Protein-arginine kinase (354 aa).

In terms of domain architecture, Phosphagen kinase C-terminal spans 24-254 (IVLSSRIRLA…QQIIQQEKLA (231 aa)). ATP contacts are provided by residues 27 to 31 (SSRIR), H92, R125, 176 to 180 (RASVM), and 207 to 212 (RGIYGE). The RDXXRA motif of the pArg binding pocket involved in allosteric regulation signature appears at 337–342 (RDYRRA).

Belongs to the ATP:guanido phosphotransferase family.

The catalysed reaction is L-arginyl-[protein] + ATP = N(omega)-phospho-L-arginyl-[protein] + ADP + H(+). Appears to be allosterically activated by the binding of pArg-containing polypeptides to the pArg-binding pocket localized in the C-terminal domain of McsB. Catalyzes the specific phosphorylation of arginine residues in a large number of proteins. Is part of the bacterial stress response system. Protein arginine phosphorylation has a physiologically important role and is involved in the regulation of many critical cellular processes, such as protein homeostasis, motility, competence, and stringent and stress responses, by regulating gene expression and protein activity. In Bacillus cereus (strain B4264), this protein is Protein-arginine kinase.